The sequence spans 179 residues: Cell division protein ZapC (179 aa).

Belongs to the ZapC family. Interacts directly with FtsZ.

The protein localises to the cytoplasm. In terms of biological role, contributes to the efficiency of the cell division process by stabilizing the polymeric form of the cell division protein FtsZ. Acts by promoting interactions between FtsZ protofilaments and suppressing the GTPase activity of FtsZ. The sequence is that of Cell division protein ZapC from Photobacterium profundum (strain SS9).